The following is a 447-amino-acid chain: Tubulin beta chain (447 aa).

GTP-binding residues include Gln11, Glu69, Ser138, Gly142, Thr143, Gly144, Asn204, and Asn226. Residue Glu69 coordinates Mg(2+). The disordered stretch occupies residues Asp427–Glu447. Acidic residues predominate over residues Gly429–Glu447.

This sequence belongs to the tubulin family. Dimer of alpha and beta chains. A typical microtubule is a hollow water-filled tube with an outer diameter of 25 nm and an inner diameter of 15 nM. Alpha-beta heterodimers associate head-to-tail to form protofilaments running lengthwise along the microtubule wall with the beta-tubulin subunit facing the microtubule plus end conferring a structural polarity. Microtubules usually have 13 protofilaments but different protofilament numbers can be found in some organisms and specialized cells. Mg(2+) serves as cofactor.

The protein resides in the cytoplasm. The protein localises to the cytoskeleton. Tubulin is the major constituent of microtubules, a cylinder consisting of laterally associated linear protofilaments composed of alpha- and beta-tubulin heterodimers. Microtubules grow by the addition of GTP-tubulin dimers to the microtubule end, where a stabilizing cap forms. Below the cap, tubulin dimers are in GDP-bound state, owing to GTPase activity of alpha-tubulin. This is Tubulin beta chain (TUB2) from Hapsidospora chrysogena (Acremonium chrysogenum).